Reading from the N-terminus, the 296-residue chain is Phosphatidylglycerol--prolipoprotein diacylglyceryl transferase (296 aa).

Transmembrane regions (helical) follow at residues 10–30, 57–77, 92–112, and 119–139; these read IAFS…LAAF, LLFY…MLFY, VWEG…ACGL, and LHFF…LGFG. Residue Arg140 participates in a 1,2-diacyl-sn-glycero-3-phospho-(1'-sn-glycerol) binding. Transmembrane regions (helical) follow at residues 194–214, 220–240, and 255–275; these read QLYE…TFSM, YAVS…VEFV, and LTMG…LLAL.

Belongs to the Lgt family.

The protein localises to the cell inner membrane. The catalysed reaction is L-cysteinyl-[prolipoprotein] + a 1,2-diacyl-sn-glycero-3-phospho-(1'-sn-glycerol) = an S-1,2-diacyl-sn-glyceryl-L-cysteinyl-[prolipoprotein] + sn-glycerol 1-phosphate + H(+). The protein operates within protein modification; lipoprotein biosynthesis (diacylglyceryl transfer). Functionally, catalyzes the transfer of the diacylglyceryl group from phosphatidylglycerol to the sulfhydryl group of the N-terminal cysteine of a prolipoprotein, the first step in the formation of mature lipoproteins. This is Phosphatidylglycerol--prolipoprotein diacylglyceryl transferase from Xanthomonas campestris pv. campestris (strain 8004).